A 283-amino-acid chain; its full sequence is Arylamine N-acetyltransferase (283 aa).

Cys70 acts as the Acyl-thioester intermediate in catalysis. Catalysis depends on residues His110 and Asp127.

This sequence belongs to the arylamine N-acetyltransferase family. As to quaternary structure, homodimer and homotetramer.

It carries out the reaction an arylamine + acetyl-CoA = an N-acetylarylamine + CoA. In terms of biological role, catalyzes the transfer of the acetyl group from acetyl coenzyme A to the free amino group of arylamines and hydrazines. Is able to utilize not only acetyl-CoA, but also n-propionyl-CoA and acetoacetyl-CoA as acyl donors, although at a lower rate. As acetyl-CoA and propionyl-CoA are products of cholesterol catabolism and the nat gene is likely present in the same operon than genes involved in cholesterol degradation, this enzyme could have a role in the utilization and regulation of these CoA species. In Mycobacterium bovis (strain ATCC BAA-935 / AF2122/97), this protein is Arylamine N-acetyltransferase (nat).